The sequence spans 278 residues: Large ribosomal subunit protein uL2 (278 aa).

The disordered stretch occupies residues 211–278 (KRWLGKRPQS…LIIRRRKGSK (68 aa)). A compositionally biased stretch (basic and acidic residues) spans 258 to 270 (KTRDTKKASEKLI).

It belongs to the universal ribosomal protein uL2 family. Part of the 50S ribosomal subunit. Forms a bridge to the 30S subunit in the 70S ribosome.

Functionally, one of the primary rRNA binding proteins. Required for association of the 30S and 50S subunits to form the 70S ribosome, for tRNA binding and peptide bond formation. It has been suggested to have peptidyltransferase activity; this is somewhat controversial. Makes several contacts with the 16S rRNA in the 70S ribosome. This is Large ribosomal subunit protein uL2 from Lactobacillus helveticus (strain DPC 4571).